We begin with the raw amino-acid sequence, 141 residues long: Hemoglobin subunit alpha-D (141 aa).

The 141-residue stretch at 1-141 (VLTAEDRRLL…VADVLCEKYR (141 aa)) folds into the Globin domain. 2 residues coordinate heme b: Q58 and H87.

This sequence belongs to the globin family. In terms of assembly, heterotetramer of two alpha chains and two beta chains. In terms of tissue distribution, red blood cells.

Its function is as follows. Involved in oxygen transport from the lung to the various peripheral tissues. This Drymarchon melanurus erebennus (Texas indigo snake) protein is Hemoglobin subunit alpha-D.